A 190-amino-acid polypeptide reads, in one-letter code: Inner membrane-spanning protein YciB (190 aa).

5 consecutive transmembrane segments (helical) span residues 22–42 (IYVA…LTFA), 50–70 (MQLI…FLHD), 76–96 (WKVT…HAMG), 118–138 (INWA…YVAF), and 148–168 (FKVF…GFYI).

This sequence belongs to the YciB family.

The protein resides in the cell inner membrane. Plays a role in cell envelope biogenesis, maintenance of cell envelope integrity and membrane homeostasis. In Vibrio campbellii (strain ATCC BAA-1116), this protein is Inner membrane-spanning protein YciB.